Here is a 99-residue protein sequence, read N- to C-terminus: uncharacterized protein (99 aa).

The first 17 residues, 1–17, serve as a signal peptide directing secretion; sequence MMMNAFFPAMALIVLVG. Cysteine 18 carries N-palmitoyl cysteine lipidation. Cysteine 18 is lipidated: S-diacylglycerol cysteine.

It is found in the cell membrane. This is an uncharacterized protein from Escherichia coli O6:H1 (strain CFT073 / ATCC 700928 / UPEC).